An 83-amino-acid chain; its full sequence is U25-theraphotoxin-Cg1a (83 aa).

The signal sequence occupies residues 1-23 (MRFHTLLFLSFLLLVSCALICTA). The propeptide occupies 24 to 48 (QHPGLEKSGMFHENVGKGQHIEEKR). 3 disulfides stabilise this stretch: Cys50-Cys66, Cys57-Cys71, and Cys65-Cys81.

The protein belongs to the neurotoxin 07 (Beta/delta-agtx) family. 03 (aga-4) subfamily. JZTX sub-subfamily. Expressed by the venom gland.

Its subcellular location is the secreted. In terms of biological role, inhibits TTX-sensitive sodium currents in rat dorsal root ganglion (DRG) neurons. The chain is U25-theraphotoxin-Cg1a from Chilobrachys guangxiensis (Chinese earth tiger tarantula).